A 341-amino-acid polypeptide reads, in one-letter code: Heat-inducible transcription repressor HrcA (341 aa).

Belongs to the HrcA family.

Its function is as follows. Negative regulator of class I heat shock genes (grpE-dnaK-dnaJ and groELS operons). Prevents heat-shock induction of these operons. This chain is Heat-inducible transcription repressor HrcA, found in Corynebacterium jeikeium (strain K411).